The primary structure comprises 534 residues: Lariat debranching enzyme (534 aa).

A divalent metal cation contacts are provided by Cys8, His10, Asp39, and Asn84. Residues 124-154 form a lariat recognition loop region; it reads SGIFKGHDFLRGHHEFPPYTDSTCRSVYHVR. Residues His174, His226, and His228 each coordinate a divalent metal cation. Disordered regions lie at residues 242–275 and 501–534; these read KLGD…PPPS and TETP…AQED.

It belongs to the lariat debranching enzyme family. Requires Fe(2+) as cofactor. It depends on Zn(2+) as a cofactor. Mn(2+) is required as a cofactor.

It is found in the nucleus. Active in presence of diverse metals including Fe(2+), Zn(2+), Mn(2+). Binds two metal cations in two adjacent alpha and beta metal-binding pockets. In terms of biological role, cleaves the 2'-5' phosphodiester linkage at the branch point of lariat intron pre-mRNAs after splicing and converts them into linear molecules that are subsequently degraded. It thereby facilitates ribonucleotide turnover. The chain is Lariat debranching enzyme (ldbr) from Drosophila melanogaster (Fruit fly).